Reading from the N-terminus, the 292-residue chain is Bifunctional protein FolD (292 aa).

NADP(+) is bound by residues 171–173 (GAS), I196, and I237.

Belongs to the tetrahydrofolate dehydrogenase/cyclohydrolase family. Homodimer.

It catalyses the reaction (6R)-5,10-methylene-5,6,7,8-tetrahydrofolate + NADP(+) = (6R)-5,10-methenyltetrahydrofolate + NADPH. It carries out the reaction (6R)-5,10-methenyltetrahydrofolate + H2O = (6R)-10-formyltetrahydrofolate + H(+). Its pathway is one-carbon metabolism; tetrahydrofolate interconversion. In terms of biological role, catalyzes the oxidation of 5,10-methylenetetrahydrofolate to 5,10-methenyltetrahydrofolate and then the hydrolysis of 5,10-methenyltetrahydrofolate to 10-formyltetrahydrofolate. This Helicobacter acinonychis (strain Sheeba) protein is Bifunctional protein FolD.